The primary structure comprises 80 residues: Exodeoxyribonuclease 7 small subunit (80 aa).

The protein belongs to the XseB family. As to quaternary structure, heterooligomer composed of large and small subunits.

Its subcellular location is the cytoplasm. The enzyme catalyses Exonucleolytic cleavage in either 5'- to 3'- or 3'- to 5'-direction to yield nucleoside 5'-phosphates.. In terms of biological role, bidirectionally degrades single-stranded DNA into large acid-insoluble oligonucleotides, which are then degraded further into small acid-soluble oligonucleotides. The polypeptide is Exodeoxyribonuclease 7 small subunit (Phenylobacterium zucineum (strain HLK1)).